Reading from the N-terminus, the 121-residue chain is uncharacterized protein (121 aa).

3 helical membrane-spanning segments follow: residues 1 to 21 (MILW…IMPV), 55 to 75 (LKYI…FCSI), and 92 to 112 (LFFK…IHFL).

Its subcellular location is the membrane. This is an uncharacterized protein from Saccharomyces cerevisiae (strain ATCC 204508 / S288c) (Baker's yeast).